Here is a 497-residue protein sequence, read N- to C-terminus: tRNA-2-methylthio-N(6)-dimethylallyladenosine synthase (497 aa).

The tract at residues Met1–Leu50 is disordered. The 118-residue stretch at Gly48 to Glu165 folds into the MTTase N-terminal domain. The [4Fe-4S] cluster site is built by Cys57, Cys94, Cys128, Cys202, Cys206, and Cys209. In terms of domain architecture, Radical SAM core spans Arg188–Asp430. The region spanning Lys433–Thr496 is the TRAM domain.

Belongs to the methylthiotransferase family. MiaB subfamily. Monomer. [4Fe-4S] cluster is required as a cofactor.

Its subcellular location is the cytoplasm. It carries out the reaction N(6)-dimethylallyladenosine(37) in tRNA + (sulfur carrier)-SH + AH2 + 2 S-adenosyl-L-methionine = 2-methylsulfanyl-N(6)-dimethylallyladenosine(37) in tRNA + (sulfur carrier)-H + 5'-deoxyadenosine + L-methionine + A + S-adenosyl-L-homocysteine + 2 H(+). In terms of biological role, catalyzes the methylthiolation of N6-(dimethylallyl)adenosine (i(6)A), leading to the formation of 2-methylthio-N6-(dimethylallyl)adenosine (ms(2)i(6)A) at position 37 in tRNAs that read codons beginning with uridine. This is tRNA-2-methylthio-N(6)-dimethylallyladenosine synthase from Xylella fastidiosa (strain 9a5c).